Reading from the N-terminus, the 597-residue chain is Probable translation initiation factor IF-2 (597 aa).

Residues 10 to 226 enclose the tr-type G domain; it reads LRTPIVAVLG…LMGLSQRFMK (217 aa). The segment at 19–26 is G1; sequence GHVDHGKT. Residue 19 to 26 participates in GTP binding; that stretch reads GHVDHGKT. The interval 44 to 48 is G2; it reads AITQH. Residues 81–84 are G3; sequence DTPG. GTP is bound by residues 81-85 and 135-138; these read DTPGH and NKVD. Residues 135–138 form a G4 region; sequence NKVD. Positions 203–205 are G5; the sequence is SAI.

The protein belongs to the TRAFAC class translation factor GTPase superfamily. Classic translation factor GTPase family. IF-2 subfamily.

In terms of biological role, function in general translation initiation by promoting the binding of the formylmethionine-tRNA to ribosomes. Seems to function along with eIF-2. This is Probable translation initiation factor IF-2 from Halorubrum lacusprofundi (strain ATCC 49239 / DSM 5036 / JCM 8891 / ACAM 34).